We begin with the raw amino-acid sequence, 308 residues long: Glutaminase (308 aa).

S66, N117, E161, N168, Y192, Y244, and V262 together coordinate substrate.

Belongs to the glutaminase family. In terms of assembly, homotetramer.

The enzyme catalyses L-glutamine + H2O = L-glutamate + NH4(+). The chain is Glutaminase from Photorhabdus laumondii subsp. laumondii (strain DSM 15139 / CIP 105565 / TT01) (Photorhabdus luminescens subsp. laumondii).